A 91-amino-acid chain; its full sequence is Cell division topological specificity factor (91 aa).

It belongs to the MinE family.

Its function is as follows. Prevents the cell division inhibition by proteins MinC and MinD at internal division sites while permitting inhibition at polar sites. This ensures cell division at the proper site by restricting the formation of a division septum at the midpoint of the long axis of the cell. In Lachnospira eligens (strain ATCC 27750 / DSM 3376 / VPI C15-48 / C15-B4) (Eubacterium eligens), this protein is Cell division topological specificity factor.